The following is a 285-amino-acid chain: Inositol polyphosphate 1-phosphatase (285 aa).

Residues Glu-68, Asp-106, Leu-108, and Asp-109 each contribute to the Mg(2+) site. Positions 109, 110, 111, 173, 195, 197, and 200 each coordinate 1D-myo-inositol 1,4-bisphosphate. A Mg(2+)-binding site is contributed by Asp-223.

The protein belongs to the inositol monophosphatase superfamily. In terms of assembly, monomer. The cofactor is Mg(2+).

It is found in the cytoplasm. It carries out the reaction 1D-myo-inositol 1,4-bisphosphate + H2O = 1D-myo-inositol 4-phosphate + phosphate. The enzyme catalyses adenosine 3',5'-bisphosphate + H2O = AMP + phosphate. Partially inhibited by Li(2+). In terms of biological role, catalyzes the hydrolysis of the 1-position phosphate from inositol 1,4-bisphosphate. Is also able to convert 3'(2')-phosphoadenosine 5'-phosphate (PAP) to AMP but with less efficiency. The sequence is that of Inositol polyphosphate 1-phosphatase from Entamoeba histolytica (strain ATCC 30459 / HM-1:IMSS / ABRM).